Here is a 155-residue protein sequence, read N- to C-terminus: Cyclic pyranopterin monophosphate synthase (155 aa).

Substrate is bound by residues Leu75–His77 and Met111–Glu112. Asp126 is a catalytic residue.

Belongs to the MoaC family. Homohexamer; trimer of dimers.

It carries out the reaction (8S)-3',8-cyclo-7,8-dihydroguanosine 5'-triphosphate = cyclic pyranopterin phosphate + diphosphate. The protein operates within cofactor biosynthesis; molybdopterin biosynthesis. Catalyzes the conversion of (8S)-3',8-cyclo-7,8-dihydroguanosine 5'-triphosphate to cyclic pyranopterin monophosphate (cPMP). The sequence is that of Cyclic pyranopterin monophosphate synthase from Corynebacterium efficiens (strain DSM 44549 / YS-314 / AJ 12310 / JCM 11189 / NBRC 100395).